The sequence spans 201 residues: Iron-sulfur flavoprotein AF_1896 (201 aa).

[4Fe-4S] cluster is bound by residues Cys46, Cys49, Cys52, and Cys57.

It belongs to the SsuE family. Isf subfamily. Homodimer. FMN serves as cofactor. Requires [4Fe-4S] cluster as cofactor.

Its function is as follows. Redox-active protein probably involved in electron transport. This chain is Iron-sulfur flavoprotein AF_1896, found in Archaeoglobus fulgidus (strain ATCC 49558 / DSM 4304 / JCM 9628 / NBRC 100126 / VC-16).